The following is a 102-amino-acid chain: Small ribosomal subunit protein uS10 (102 aa).

The protein belongs to the universal ribosomal protein uS10 family. As to quaternary structure, part of the 30S ribosomal subunit.

In terms of biological role, involved in the binding of tRNA to the ribosomes. This Xanthobacter autotrophicus (strain ATCC BAA-1158 / Py2) protein is Small ribosomal subunit protein uS10.